Here is a 358-residue protein sequence, read N- to C-terminus: Alanine racemase (358 aa).

Lysine 35 (proton acceptor; specific for D-alanine) is an active-site residue. The residue at position 35 (lysine 35) is an N6-(pyridoxal phosphate)lysine. Residue arginine 130 participates in substrate binding. The active-site Proton acceptor; specific for L-alanine is tyrosine 255. Methionine 303 is a substrate binding site.

It belongs to the alanine racemase family. Pyridoxal 5'-phosphate is required as a cofactor.

It catalyses the reaction L-alanine = D-alanine. The protein operates within amino-acid biosynthesis; D-alanine biosynthesis; D-alanine from L-alanine: step 1/1. Functionally, catalyzes the interconversion of L-alanine and D-alanine. May also act on other amino acids. In Shewanella baltica (strain OS155 / ATCC BAA-1091), this protein is Alanine racemase (alr).